The following is a 189-amino-acid chain: Peptide deformylase (189 aa).

C116 and H159 together coordinate Fe cation. E160 is a catalytic residue. Residue H163 coordinates Fe cation.

It belongs to the polypeptide deformylase family. The cofactor is Fe(2+).

The catalysed reaction is N-terminal N-formyl-L-methionyl-[peptide] + H2O = N-terminal L-methionyl-[peptide] + formate. Functionally, removes the formyl group from the N-terminal Met of newly synthesized proteins. Requires at least a dipeptide for an efficient rate of reaction. N-terminal L-methionine is a prerequisite for activity but the enzyme has broad specificity at other positions. This Limosilactobacillus fermentum (strain NBRC 3956 / LMG 18251) (Lactobacillus fermentum) protein is Peptide deformylase.